The primary structure comprises 140 residues: Large ribosomal subunit protein uL11 (140 aa).

This sequence belongs to the universal ribosomal protein uL11 family. In terms of assembly, part of the ribosomal stalk of the 50S ribosomal subunit. Interacts with L10 and the large rRNA to form the base of the stalk. L10 forms an elongated spine to which L12 dimers bind in a sequential fashion forming a multimeric L10(L12)X complex. In terms of processing, one or more lysine residues are methylated.

In terms of biological role, forms part of the ribosomal stalk which helps the ribosome interact with GTP-bound translation factors. The sequence is that of Large ribosomal subunit protein uL11 from Lawsonia intracellularis (strain PHE/MN1-00).